The primary structure comprises 630 residues: tRNA uridine 5-carboxymethylaminomethyl modification enzyme MnmG (630 aa).

Gly13–Gly18 is a binding site for FAD. Gly273 to Phe287 serves as a coordination point for NAD(+).

The protein belongs to the MnmG family. As to quaternary structure, homodimer. Heterotetramer of two MnmE and two MnmG subunits. FAD is required as a cofactor.

Its subcellular location is the cytoplasm. Functionally, NAD-binding protein involved in the addition of a carboxymethylaminomethyl (cmnm) group at the wobble position (U34) of certain tRNAs, forming tRNA-cmnm(5)s(2)U34. The chain is tRNA uridine 5-carboxymethylaminomethyl modification enzyme MnmG from Pseudomonas aeruginosa (strain LESB58).